The primary structure comprises 818 residues: Piwi-like protein (818 aa).

The PAZ domain maps to 220–339 (RINRVLNDNS…ITGELCFLCG (120 aa)). Residues 501-800 (KIALVFVPDD…LAELIGKVHK (300 aa)) form the Piwi domain.

This sequence belongs to the argonaute family. Piwi subfamily.

In Dugesia japonica (Planarian), this protein is Piwi-like protein (iwi).